The sequence spans 485 residues: U4/U6 small nuclear ribonucleoprotein Prp31 homolog (485 aa).

Disordered regions lie at residues 1 to 36 (MATLEDSFLADLDELSDNEAELDENDGDVGKEEEDV) and 329 to 361 (IEKWQEPPPARQPKPLPVPDSEPKKRRGGRRLR). The span at 11–36 (DLDELSDNEAELDENDGDVGKEEEDV) shows a compositional bias: acidic residues. In terms of domain architecture, Nop spans 216–334 (IAPNLSAIVG…IRKKIEKWQE (119 aa)). The span at 334–348 (EPPPARQPKPLPVPD) shows a compositional bias: pro residues. Over residues 352–361 (KKRRGGRRLR) the composition is skewed to basic residues. The Nuclear localization signal motif lies at 352–365 (KKRRGGRRLRKMKE).

The protein belongs to the PRP31 family. As to quaternary structure, component of the U4/U6-U5 tri-snRNP complex composed of the U4, U6 and U5 snRNAs and pre-mRNA-splicing factors. Interacts with STA1 and SOP1.

The protein localises to the nucleus. It localises to the cajal body. Functionally, involved in pre-mRNA splicing. Required for the assembly of the U4/U5/U6 tri-snRNP complex, one of the building blocks of the spliceosome. Functions in association with STA1 and ZOP1 in spliceosome dynamics and pre-mRNA splicing. Required for transcriptional regulation and pre-mRNA splicing of cold-responsive genes, such as LTI78/RD29A, KIN2/COR6.6 or COR15A, especially under cold stress. May play a role in stress response. Involved in transcriptional gene silencing of endogenous transposable elements, independently of the RNA-directed DNA methylation (RdDM) pathway. Seems not to participate in the small RNA biogenesis of the RdDM pathway. The chain is U4/U6 small nuclear ribonucleoprotein Prp31 homolog from Arabidopsis thaliana (Mouse-ear cress).